A 236-amino-acid polypeptide reads, in one-letter code: Small ribosomal subunit protein uS3 (236 aa).

Residues 39–107 (IREILHKELK…DVVINIVEIR (69 aa)) form the KH type-2 domain. Residues 213 to 236 (MAQDKRMNEGGGESPSPRSRRDAA) are disordered.

Belongs to the universal ribosomal protein uS3 family. In terms of assembly, part of the 30S ribosomal subunit. Forms a tight complex with proteins S10 and S14.

In terms of biological role, binds the lower part of the 30S subunit head. Binds mRNA in the 70S ribosome, positioning it for translation. The protein is Small ribosomal subunit protein uS3 of Bradyrhizobium sp. (strain ORS 278).